Here is a 542-residue protein sequence, read N- to C-terminus: 2,3-bisphosphoglycerate-independent phosphoglycerate mutase (542 aa).

2 residues coordinate Mn(2+): aspartate 13 and serine 63. Residue serine 63 is the Phosphoserine intermediate of the active site. Substrate is bound by residues histidine 124, 154–155 (RD), arginine 186, arginine 192, 263–266 (RADR), and lysine 357. Positions 424, 428, 465, 466, and 484 each coordinate Mn(2+).

It belongs to the BPG-independent phosphoglycerate mutase family. Monomer. Mn(2+) serves as cofactor.

The catalysed reaction is (2R)-2-phosphoglycerate = (2R)-3-phosphoglycerate. Its pathway is carbohydrate degradation; glycolysis; pyruvate from D-glyceraldehyde 3-phosphate: step 3/5. Its function is as follows. Catalyzes the interconversion of 2-phosphoglycerate and 3-phosphoglycerate. The polypeptide is 2,3-bisphosphoglycerate-independent phosphoglycerate mutase (Herpetosiphon aurantiacus (strain ATCC 23779 / DSM 785 / 114-95)).